Consider the following 225-residue polypeptide: ATP-dependent Clp protease proteolytic subunit (225 aa).

Residue S123 is the Nucleophile of the active site. The active site involves H148.

Belongs to the peptidase S14 family. In terms of assembly, fourteen ClpP subunits assemble into 2 heptameric rings which stack back to back to give a disk-like structure with a central cavity, resembling the structure of eukaryotic proteasomes.

It is found in the cytoplasm. It catalyses the reaction Hydrolysis of proteins to small peptides in the presence of ATP and magnesium. alpha-casein is the usual test substrate. In the absence of ATP, only oligopeptides shorter than five residues are hydrolyzed (such as succinyl-Leu-Tyr-|-NHMec, and Leu-Tyr-Leu-|-Tyr-Trp, in which cleavage of the -Tyr-|-Leu- and -Tyr-|-Trp bonds also occurs).. Its function is as follows. Cleaves peptides in various proteins in a process that requires ATP hydrolysis. Has a chymotrypsin-like activity. Plays a major role in the degradation of misfolded proteins. In Chlorobium luteolum (strain DSM 273 / BCRC 81028 / 2530) (Pelodictyon luteolum), this protein is ATP-dependent Clp protease proteolytic subunit.